A 91-amino-acid chain; its full sequence is MEQQQDRRELDAKAREGETVVPGGTGGKSLDAQERLAEGRSRGGQTRKEQIGSEGYQEMGRKGGLSSAGGPGGERASEEGRPIDESKYRHP.

2 stretches are compositionally biased toward basic and acidic residues: residues 1-18 (MEQQ…REGE) and 31-51 (DAQE…KEQI). Residues 1 to 91 (MEQQQDRREL…PIDESKYRHP (91 aa)) form a disordered region. The span at 62–73 (KGGLSSAGGPGG) shows a compositional bias: gly residues. Positions 75–91 (RASEEGRPIDESKYRHP) are enriched in basic and acidic residues.

Belongs to the small hydrophilic plant seed protein family.

This Picea glauca (White spruce) protein is Em-like protein.